Consider the following 952-residue polypeptide: Respiratory burst oxidase homolog protein E (952 aa).

The Cytoplasmic portion of the chain corresponds to 1–392; that stretch reads MKLSPLSFST…QCLILDNWQR (392 aa). EF-hand-like stretches follow at residues 211-219 and 245-256; these read SKNGLLARD and RRQKLEKITKDE. EF-hand domains are found at residues 268–303 and 312–347; these read SFDA…SASA and QAEE…RDAY. Ca(2+)-binding residues include D281, N283, D285, K287, and E292. Residues 393–413 form a helical membrane-spanning segment; the sequence is SWVLLVWVMLMAILFVWKFLE. The Extracellular segment spans residues 414-475; sequence YREKAAFKVM…PFDDNINFHK (62 aa). The 157-residue stretch at 431 to 587 folds into the Ferric oxidoreductase domain; the sequence is KGAAETLKLN…LLVVVYIMLI (157 aa). Residues 476–496 traverse the membrane as a helical segment; it reads IIACAIAIGILVHAGTHLACD. Residues 497 to 531 are Cytoplasmic-facing; sequence FPRIINSSPEQFVLIASAFNGTKPTFKDLMTGAEG. Residues 532-552 traverse the membrane as a helical segment; the sequence is ITGISMVILTTIAFTLASTHF. Residues 553 to 574 are Extracellular-facing; sequence RRNRVRLPAPLDRLTGFNAFWY. The helical transmembrane segment at 575–595 threads the bilayer; that stretch reads THHLLVVVYIMLIVHGTFLFF. Residues 596 to 603 lie on the Cytoplasmic side of the membrane; sequence ADKWYQKT. Residues 604–621 traverse the membrane as a helical segment; the sequence is TWMYISVPLVLYVAERSL. Residues 622-750 lie on the Extracellular side of the membrane; sequence RACRSKHYSV…PYGAPAQDYR (129 aa). In terms of domain architecture, FAD-binding FR-type spans 626-748; the sequence is SKHYSVKILK…DGPYGAPAQD (123 aa). The helical transmembrane segment at 751–771 threads the bilayer; sequence SYDVLLLIGLGIGATPFISIL. The Cytoplasmic portion of the chain corresponds to 772–952; the sequence is KDLLNNSRDE…TRFEFHKEHF (181 aa).

The protein belongs to the RBOH (TC 5.B.1.3) family. Monomer and homodimer. In terms of tissue distribution, expressed in roots, inflorescences, leaves and stems.

The protein localises to the membrane. Calcium-dependent NADPH oxidase that generates superoxide. In Arabidopsis thaliana (Mouse-ear cress), this protein is Respiratory burst oxidase homolog protein E (RBOHE).